The following is a 1225-amino-acid chain: Cytosolic carboxypeptidase 1 (1225 aa).

Acidic residues predominate over residues 366 to 392 (DDVVDESDDNEDTDAETEAEAENEDSD). Positions 366–398 (DDVVDESDDNEDTDAETEAEAENEDSDQICKND) are disordered. Positions 842 to 1132 (YPYTYSTLKM…KFCVGLLRLK (291 aa)) constitute a Peptidase M14 domain. The Zn(2+) site is built by His-914, Glu-917, and His-1011. Glu-1096 functions as the Proton donor/acceptor in the catalytic mechanism. Over residues 1181-1193 (YSAESNDDVDPDL) the composition is skewed to acidic residues. The segment at 1181–1225 (YSAESNDDVDPDLPENIGDFETSTLEEESFSDSEITRTHMSGQST) is disordered.

This sequence belongs to the peptidase M14 family. Requires Zn(2+) as cofactor.

It localises to the cytoplasm. The protein resides in the cytosol. Its subcellular location is the nucleus. It is found in the mitochondrion. The enzyme catalyses (L-glutamyl)(n+1)-gamma-L-glutamyl-L-glutamyl-[protein] + H2O = (L-glutamyl)(n)-gamma-L-glutamyl-L-glutamyl-[protein] + L-glutamate. The catalysed reaction is C-terminal L-alpha-aminoacyl-L-glutamyl-L-glutamyl-[tubulin] + H2O = C-terminal L-alpha-aminoacyl-L-glutamyl-[tubulin] + L-glutamate. Functionally, metallocarboxypeptidase that mediates protein deglutamylation of tubulin and non-tubulin target proteins. Catalyzes the removal of polyglutamate side chains present on the gamma-carboxyl group of glutamate residues within the C-terminal tail of alpha- and beta-tubulin. Specifically cleaves tubulin long-side-chains, while it is not able to remove the branching point glutamate. Also catalyzes the removal of polyglutamate residues from the carboxy-terminus of alpha-tubulin as well as non-tubulin proteins. The chain is Cytosolic carboxypeptidase 1 (agtpbp1) from Xenopus laevis (African clawed frog).